The chain runs to 345 residues: Probable dual-specificity RNA methyltransferase RlmN (345 aa).

The active-site Proton acceptor is Glu-90. Positions 96-327 (QSYGNSVCVT…CIVRREFGHD (232 aa)) constitute a Radical SAM core domain. An intrachain disulfide couples Cys-103 to Cys-332. Cys-110, Cys-114, and Cys-117 together coordinate [4Fe-4S] cluster. Residues 160 to 161 (GE), Ser-192, 215 to 217 (SLH), and Asn-291 contribute to the S-adenosyl-L-methionine site. The S-methylcysteine intermediate role is filled by Cys-332.

Belongs to the radical SAM superfamily. RlmN family. The cofactor is [4Fe-4S] cluster.

Its subcellular location is the cytoplasm. It catalyses the reaction adenosine(2503) in 23S rRNA + 2 reduced [2Fe-2S]-[ferredoxin] + 2 S-adenosyl-L-methionine = 2-methyladenosine(2503) in 23S rRNA + 5'-deoxyadenosine + L-methionine + 2 oxidized [2Fe-2S]-[ferredoxin] + S-adenosyl-L-homocysteine. The catalysed reaction is adenosine(37) in tRNA + 2 reduced [2Fe-2S]-[ferredoxin] + 2 S-adenosyl-L-methionine = 2-methyladenosine(37) in tRNA + 5'-deoxyadenosine + L-methionine + 2 oxidized [2Fe-2S]-[ferredoxin] + S-adenosyl-L-homocysteine. Its function is as follows. Specifically methylates position 2 of adenine 2503 in 23S rRNA and position 2 of adenine 37 in tRNAs. This is Probable dual-specificity RNA methyltransferase RlmN from Spiroplasma citri.